A 60-amino-acid chain; its full sequence is Small ribosomal subunit protein eS31 (60 aa).

The Zn(2+) site is built by Cys-27, Cys-30, Cys-45, and Cys-48. The segment at 27-48 (CPRCGPGVFMAEHLNRYACGKC) adopts a C4-type zinc-finger fold.

This sequence belongs to the eukaryotic ribosomal protein eS31 family. As to quaternary structure, part of the 30S ribosomal subunit. Requires Zn(2+) as cofactor.

The polypeptide is Small ribosomal subunit protein eS31 (Methanocaldococcus jannaschii (strain ATCC 43067 / DSM 2661 / JAL-1 / JCM 10045 / NBRC 100440) (Methanococcus jannaschii)).